The following is a 45-amino-acid chain: Pseudo-hevein (45 aa).

A Chitin-binding type-1 domain is found at 1–43 (EQCGRQAGGKLCPNNLCCSQYGWCGSSDDYCSPSKNCQSNCKG). 4 cysteine pairs are disulfide-bonded: cysteine 3–cysteine 18, cysteine 12–cysteine 24, cysteine 17–cysteine 31, and cysteine 37–cysteine 41.

In terms of biological role, N-acetyl-D-glucosamine / N-acetyl-D-neuraminic acid binding lectin. Can inhibit fungal growth. The polypeptide is Pseudo-hevein (Hevea brasiliensis (Para rubber tree)).